Consider the following 141-residue polypeptide: Cystatin (141 aa).

The signal sequence occupies residues 1 to 26 (MVHSQLPVAGPLRLLCALLLLPSATM). The Cystatin domain occupies 29–129 (GGLSPRSVTD…CRFQVWSRPW (101 aa)). Positions 73–77 (QVVSG) match the Secondary area of contact motif. 2 disulfide bridges follow: Cys91–Cys107 and Cys120–Cys140.

Belongs to the cystatin family. In terms of tissue distribution, expressed at a low level by the venom gland (at protein level).

It is found in the secreted. In terms of biological role, inhibits various C1 cysteine proteases including cathepsin L, papain and cathepsin B. This protein has no toxic activity and its function in the venom is unknown. It may play a role as a housekeeping or regulatory protein. In Pseudechis porphyriacus (Red-bellied black snake), this protein is Cystatin.